Here is a 433-residue protein sequence, read N- to C-terminus: N-lysine methyltransferase SMYD2 (433 aa).

One can recognise an SET domain in the interval 7 to 241 (GGLERFCSPG…PGEEVFTSYI (235 aa)). An S-adenosyl-L-methionine-binding site is contributed by 17–19 (KGR). Zn(2+) is bound by residues Cys52, Cys55, Cys65, Cys68, Cys74, Cys78, His86, and Cys90. The segment at 52-90 (CEYCFTRKEGLSKCGRCKQAFYCNVECQKEDWPMHKLEC) adopts an MYND-type zinc-finger fold. Residues His137, 206-207 (NH), and 258-260 (YFF) contribute to the S-adenosyl-L-methionine site. At Ser283 the chain carries Phosphoserine.

The protein belongs to the class V-like SAM-binding methyltransferase superfamily. In terms of assembly, interacts with RNA polymerase II and HELZ. Interacts with SIN3A and HDAC1. Interacts (via MYND-type zinc finger) with EPB41L3. Interacts (via SET domain) with p53/TP53. Interacts with RB1 and HSP90AA1.

Its subcellular location is the cytoplasm. The protein resides in the cytosol. The protein localises to the nucleus. It catalyses the reaction L-lysyl(4)-[histone H3] + 3 S-adenosyl-L-methionine = N(6),N(6),N(6)-trimethyl-L-lysyl(4)-[histone H3] + 3 S-adenosyl-L-homocysteine + 3 H(+). The catalysed reaction is L-lysyl-[protein] + S-adenosyl-L-methionine = N(6)-methyl-L-lysyl-[protein] + S-adenosyl-L-homocysteine + H(+). Functionally, protein-lysine N-methyltransferase that methylates both histones and non-histone proteins, including p53/TP53 and RB1. Specifically trimethylates histone H3 'Lys-4' (H3K4me3) in vivo. The activity requires interaction with HSP90alpha. Shows even higher methyltransferase activity on p53/TP53. Monomethylates 'Lys-370' of p53/TP53, leading to decreased DNA-binding activity and subsequent transcriptional regulation activity of p53/TP53. Monomethylates RB1 at 'Lys-860'. This is N-lysine methyltransferase SMYD2 (SMYD2) from Homo sapiens (Human).